We begin with the raw amino-acid sequence, 357 residues long: Peptide chain release factor 1 (357 aa).

Gln-232 bears the N5-methylglutamine mark. Positions 284–304 are enriched in basic and acidic residues; that stretch reads AERAAERKGQIGSGDRSERIR. The segment at 284–308 is disordered; sequence AERAAERKGQIGSGDRSERIRTYNY.

It belongs to the prokaryotic/mitochondrial release factor family. Methylated by PrmC. Methylation increases the termination efficiency of RF1.

Its subcellular location is the cytoplasm. Functionally, peptide chain release factor 1 directs the termination of translation in response to the peptide chain termination codons UAG and UAA. The chain is Peptide chain release factor 1 from Maricaulis maris (strain MCS10) (Caulobacter maris).